Consider the following 376-residue polypeptide: Alanine racemase (376 aa).

The active-site Proton acceptor; specific for D-alanine is the Lys40. Lys40 bears the N6-(pyridoxal phosphate)lysine mark. Residue Arg138 coordinates substrate. Tyr270 (proton acceptor; specific for L-alanine) is an active-site residue. Met317 contacts substrate.

This sequence belongs to the alanine racemase family. Pyridoxal 5'-phosphate is required as a cofactor.

The catalysed reaction is L-alanine = D-alanine. It functions in the pathway amino-acid biosynthesis; D-alanine biosynthesis; D-alanine from L-alanine: step 1/1. Catalyzes the interconversion of L-alanine and D-alanine. May also act on other amino acids. This is Alanine racemase (alr) from Lactobacillus delbrueckii subsp. bulgaricus (strain ATCC BAA-365 / Lb-18).